The sequence spans 316 residues: Retinol dehydrogenase 12 (316 aa).

NADP(+) is bound at residue 46 to 52 (GANTGIG). Position 175 (Ser175) interacts with substrate. Tyr200 serves as the catalytic Proton acceptor.

The protein belongs to the short-chain dehydrogenases/reductases (SDR) family. Widely expressed, mostly in retina, kidney, brain, skeletal muscle, pancreas and stomach.

It localises to the endoplasmic reticulum membrane. The catalysed reaction is all-trans-retinol + NADP(+) = all-trans-retinal + NADPH + H(+). It carries out the reaction 11-cis-retinol + NADP(+) = 11-cis-retinal + NADPH + H(+). The enzyme catalyses 9-cis-retinol + NADP(+) = 9-cis-retinal + NADPH + H(+). It catalyses the reaction a 4-hydroxynonen-1-ol + NADP(+) = a 4-hydroxynonenal + NADPH + H(+). The catalysed reaction is (E)-non-2-en-1-ol + NADP(+) = (E)-non-2-enal + NADPH + H(+). It carries out the reaction (Z)-non-6-en-1-ol + NADP(+) = (Z)-non-6-enal + NADPH + H(+). The enzyme catalyses nonan-1-ol + NADP(+) = nonanal + NADPH + H(+). It functions in the pathway cofactor metabolism; retinol metabolism. In terms of biological role, retinoids dehydrogenase/reductase with a clear preference for NADP. Displays high activity towards 9-cis, 11-cis and all-trans-retinal. Shows very weak activity towards 13-cis-retinol. Also exhibits activity, albeit with lower affinity than for retinaldehydes, towards lipid peroxidation products (C9 aldehydes) such as 4-hydroxynonenal and trans-2-nonenal. May play an important function in photoreceptor cells to detoxify 4-hydroxynonenal and potentially other toxic aldehyde products resulting from lipid peroxidation. Has no dehydrogenase activity towards steroids. The chain is Retinol dehydrogenase 12 (RDH12) from Homo sapiens (Human).